Reading from the N-terminus, the 267-residue chain is 4-hydroxy-tetrahydrodipicolinate reductase (267 aa).

NAD(+) contacts are provided by residues 10 to 15 and Glu-36; that span reads GCGGRM. Arg-37 contacts NADP(+). Residues 99–101 and 123–126 contribute to the NAD(+) site; these read GTT and APNF. The active-site Proton donor/acceptor is His-156. His-157 provides a ligand contact to (S)-2,3,4,5-tetrahydrodipicolinate. Lys-160 serves as the catalytic Proton donor. 166 to 167 provides a ligand contact to (S)-2,3,4,5-tetrahydrodipicolinate; the sequence is GT.

It belongs to the DapB family.

The protein resides in the cytoplasm. The enzyme catalyses (S)-2,3,4,5-tetrahydrodipicolinate + NAD(+) + H2O = (2S,4S)-4-hydroxy-2,3,4,5-tetrahydrodipicolinate + NADH + H(+). It carries out the reaction (S)-2,3,4,5-tetrahydrodipicolinate + NADP(+) + H2O = (2S,4S)-4-hydroxy-2,3,4,5-tetrahydrodipicolinate + NADPH + H(+). It functions in the pathway amino-acid biosynthesis; L-lysine biosynthesis via DAP pathway; (S)-tetrahydrodipicolinate from L-aspartate: step 4/4. Functionally, catalyzes the conversion of 4-hydroxy-tetrahydrodipicolinate (HTPA) to tetrahydrodipicolinate. The polypeptide is 4-hydroxy-tetrahydrodipicolinate reductase (Laribacter hongkongensis (strain HLHK9)).